The primary structure comprises 288 residues: Phosphatidylserine decarboxylase proenzyme (288 aa).

Residues aspartate 88, histidine 145, and serine 248 each act as charge relay system; for autoendoproteolytic cleavage activity in the active site. The Schiff-base intermediate with substrate; via pyruvic acid; for decarboxylase activity role is filled by serine 248. Residue serine 248 is modified to Pyruvic acid (Ser); by autocatalysis.

The protein belongs to the phosphatidylserine decarboxylase family. PSD-B subfamily. Prokaryotic type I sub-subfamily. Heterodimer of a large membrane-associated beta subunit and a small pyruvoyl-containing alpha subunit. It depends on pyruvate as a cofactor. Post-translationally, is synthesized initially as an inactive proenzyme. Formation of the active enzyme involves a self-maturation process in which the active site pyruvoyl group is generated from an internal serine residue via an autocatalytic post-translational modification. Two non-identical subunits are generated from the proenzyme in this reaction, and the pyruvate is formed at the N-terminus of the alpha chain, which is derived from the carboxyl end of the proenzyme. The autoendoproteolytic cleavage occurs by a canonical serine protease mechanism, in which the side chain hydroxyl group of the serine supplies its oxygen atom to form the C-terminus of the beta chain, while the remainder of the serine residue undergoes an oxidative deamination to produce ammonia and the pyruvoyl prosthetic group on the alpha chain. During this reaction, the Ser that is part of the protease active site of the proenzyme becomes the pyruvoyl prosthetic group, which constitutes an essential element of the active site of the mature decarboxylase.

The protein localises to the cell membrane. It catalyses the reaction a 1,2-diacyl-sn-glycero-3-phospho-L-serine + H(+) = a 1,2-diacyl-sn-glycero-3-phosphoethanolamine + CO2. It functions in the pathway phospholipid metabolism; phosphatidylethanolamine biosynthesis; phosphatidylethanolamine from CDP-diacylglycerol: step 2/2. In terms of biological role, catalyzes the formation of phosphatidylethanolamine (PtdEtn) from phosphatidylserine (PtdSer). This is Phosphatidylserine decarboxylase proenzyme from Azoarcus sp. (strain BH72).